The following is a 106-amino-acid chain: uncharacterized protein (106 aa).

The Cytoplasmic segment spans residues 1 to 6 (MYQTSP). A helical transmembrane segment spans residues 7–27 (LSLFYFQVLVPKFLECFLCFP). Over 28-32 (YHKIS) the chain is Extracellular. The helical transmembrane segment at 33-53 (LVALLSFFYCQLQTNMIILLS) threads the bilayer. At 54-73 (QIKRFLYRQIMIALKIKAKK) the chain is on the cytoplasmic side. A helical transmembrane segment spans residues 74 to 94 (FWFIFKYFNVSCDARLFNELF). At 95 to 106 (YIFQTYVSVDSK) the chain is on the extracellular side.

The protein resides in the membrane. This is an uncharacterized protein from Saccharomyces cerevisiae (strain ATCC 204508 / S288c) (Baker's yeast).